A 418-amino-acid polypeptide reads, in one-letter code: Histidine--tRNA ligase (418 aa).

This sequence belongs to the class-II aminoacyl-tRNA synthetase family.

Its subcellular location is the cytoplasm. The catalysed reaction is tRNA(His) + L-histidine + ATP = L-histidyl-tRNA(His) + AMP + diphosphate + H(+). The chain is Histidine--tRNA ligase from Methanococcus maripaludis (strain C7 / ATCC BAA-1331).